The chain runs to 136 residues: Nucleoside diphosphate kinase (136 aa).

ATP-binding residues include Lys9, Phe57, Arg85, Thr91, Arg102, and Asn112. His115 functions as the Pros-phosphohistidine intermediate in the catalytic mechanism.

This sequence belongs to the NDK family. As to quaternary structure, homotetramer. Requires Mg(2+) as cofactor.

The protein localises to the cytoplasm. The enzyme catalyses a 2'-deoxyribonucleoside 5'-diphosphate + ATP = a 2'-deoxyribonucleoside 5'-triphosphate + ADP. The catalysed reaction is a ribonucleoside 5'-diphosphate + ATP = a ribonucleoside 5'-triphosphate + ADP. In terms of biological role, major role in the synthesis of nucleoside triphosphates other than ATP. The ATP gamma phosphate is transferred to the NDP beta phosphate via a ping-pong mechanism, using a phosphorylated active-site intermediate. This is Nucleoside diphosphate kinase from Acetivibrio thermocellus (strain ATCC 27405 / DSM 1237 / JCM 9322 / NBRC 103400 / NCIMB 10682 / NRRL B-4536 / VPI 7372) (Clostridium thermocellum).